Here is a 151-residue protein sequence, read N- to C-terminus: Kinetoplast-associated protein 1 (151 aa).

The propeptide occupies 1-9; sequence MLRVSVRSL. Residues 13 to 151 form a disordered region; sequence ASSKAGSKAA…KKGAAKKAHK (139 aa). Low complexity-rich tracts occupy residues 15–49, 70–91, and 101–111; these read SKAG…VPPV, AAAA…TPAK, and SKPSAPKQAAG. Residues 112–151 show a composition bias toward basic residues; that stretch reads KMRKAAGKAQRKIKAAARKAAPKKMAKSFGKKGAAKKAHK.

This sequence belongs to the KAP family. In terms of assembly, associates with the kinetoplast DNA network.

It is found in the mitochondrion matrix. It localises to the kinetoplast. Histone H1-like DNA-binding protein involved in the organization and segregation of kinetoplast DNA (kDNA). The mitochondrial DNA of kinetoplastid protozoa consists of about 5,000 minicircles and 20 to 30 maxicircles. These circular DNAs are held together by catenation into a highly organized compact disk structure referred to as a kinetoplast DNA (kDNA) network. Binds preferentially to a specific fragment of minicircle DNA and is able to compact kDNA networks through DNA charge neutralization and condensation. This Crithidia fasciculata protein is Kinetoplast-associated protein 1 (KAP4).